The following is a 685-amino-acid chain: Bifunctional lycopene cyclase/phytoene synthase (685 aa).

Residues 15 to 255 (TLSYRHFHLL…LVSACFTFDR (241 aa)) form a lycopene beta-cyclase region. A run of 7 helical transmembrane segments spans residues 21–41 (FHLL…RPFL), 48–68 (KLIL…NLIV), 92–114 (YFFF…RWAL), 129–149 (LATP…KAAV), 156–176 (YFGM…WGSV), 187–207 (GLAP…ASDV), and 231–251 (LPIE…SACF). A phytoene synthase region spans residues 262 to 685 (QSVAENAPPL…RAVSAVYFGV (424 aa)).

This sequence in the N-terminal section; belongs to the lycopene beta-cyclase family. In the C-terminal section; belongs to the phytoene/squalene synthase family.

Its subcellular location is the membrane. The catalysed reaction is all-trans-lycopene = gamma-carotene. It carries out the reaction gamma-carotene = all-trans-beta-carotene. The enzyme catalyses 2 (2E,6E,10E)-geranylgeranyl diphosphate = 15-cis-phytoene + 2 diphosphate. The protein operates within carotenoid biosynthesis; beta-carotene biosynthesis. It functions in the pathway carotenoid biosynthesis; phytoene biosynthesis; all-trans-phytoene from geranylgeranyl diphosphate: step 1/1. Its function is as follows. Bifunctional enzyme that catalyzes the reactions from geranylgeranyl diphosphate to phytoene (phytoene synthase) and lycopene to beta-carotene via the intermediate gamma-carotene (lycopene cyclase). This Sporisorium reilianum (strain SRZ2) (Maize head smut fungus) protein is Bifunctional lycopene cyclase/phytoene synthase.